The sequence spans 200 residues: Holliday junction resolvase RecU (200 aa).

The interval 1 to 25 (MTIRYPNGKRYNQASQPQKTPIKTH) is disordered. The span at 10–25 (RYNQASQPQKTPIKTH) shows a compositional bias: polar residues. 4 residues coordinate Mg(2+): threonine 85, aspartate 87, glutamate 100, and glutamine 119.

This sequence belongs to the RecU family. Requires Mg(2+) as cofactor.

The protein resides in the cytoplasm. It catalyses the reaction Endonucleolytic cleavage at a junction such as a reciprocal single-stranded crossover between two homologous DNA duplexes (Holliday junction).. Endonuclease that resolves Holliday junction intermediates in genetic recombination. Cleaves mobile four-strand junctions by introducing symmetrical nicks in paired strands. Promotes annealing of linear ssDNA with homologous dsDNA. Required for DNA repair, homologous recombination and chromosome segregation. This is Holliday junction resolvase RecU from Bacillus cereus (strain B4264).